A 3068-amino-acid chain; its full sequence is Highly reducing polyketide synthase 17 (3068 aa).

Positions isoleucine 100–arginine 526 constitute a Ketosynthase family 3 (KS3) domain. Residues cysteine 274, histidine 410, and histidine 449 each act as for beta-ketoacyl synthase activity in the active site. The segment at tyrosine 627–alanine 938 is malonyl-CoA:ACP transacylase (MAT) domain. The active-site For malonyltransferase activity is serine 721. The tract at residues histidine 1027–aspartate 1160 is N-terminal hotdog fold. The segment at histidine 1027–valine 1311 is dehydratase (DH) domain. Positions histidine 1027–glycine 1334 constitute a PKS/mFAS DH domain. Catalysis depends on histidine 1059, which acts as the Proton acceptor; for dehydratase activity. Residues asparagine 1179–glycine 1334 form a C-terminal hotdog fold region. The active-site Proton donor; for dehydratase activity is aspartate 1247. Residues leucine 1735–leucine 2037 are enoylreductase (ER) domain. The tract at residues alanine 2062–glutamate 2240 is catalytic ketoreductase (KR) domain. The Carrier domain occupies threonine 2345–serine 2423. Serine 2383 carries the post-translational modification O-(pantetheine 4'-phosphoryl)serine. The interval phenylalanine 2831 to aspartate 3062 is choline/carnitine acyltransferase (cAT) domain.

It functions in the pathway secondary metabolite biosynthesis. In terms of biological role, highly reducing polyketide synthase; part of the gene cluster that mediates the biosynthesis of (2Z,4E,6E,10E)-9-hydroxydodeca-2,4,6,10-tetraenoic acid (BAA), (2E,4E,6E,10E)-9-hydroxydodeca-2,4,6,10-tetraenoic acid (BAB), and (2Z,4E,6E)-octa-2,4,6-trienedioic acid (PBA). The highly reducing polyketide synthase Ba17a is sufficent to produce PBA and BAA. The still to be characterized protein Ba17b leads to an increased production of BAA as well as to the production of the new compound BAB. BAA does not possess insecticidal activity against G.mellonella larvae, however, both BAA and BAB increase the growth of Candida albicans and BAA can mitigate the fungicidal effects of fluconazole over C.albicans, suggesting that generalist pathogens such as M.anisopliae, can potentially manipulate the yeast microbiota found in arthropods (and anywhere else) by the activity of compounds as BAA and BAB. This Metarhizium anisopliae (Entomophthora anisopliae) protein is Highly reducing polyketide synthase 17.